Reading from the N-terminus, the 189-residue chain is Interferon alpha-12 (189 aa).

The N-terminal stretch at 1–23 (MARLCAFLMTLLVMSYWSTCSLG) is a signal peptide. 2 disulfides stabilise this stretch: cysteine 24/cysteine 122 and cysteine 52/cysteine 162. N-linked (GlcNAc...) asparagine glycosylation is present at asparagine 101.

The protein belongs to the alpha/beta interferon family.

The protein localises to the secreted. Functionally, produced by macrophages, IFN-alpha have antiviral activities. Interferon stimulates the production of two enzymes: a protein kinase and an oligoadenylate synthetase. The protein is Interferon alpha-12 (Ifna12) of Mus musculus (Mouse).